The sequence spans 328 residues: m7GpppN-mRNA hydrolase NUDT17 (328 aa).

Positions 90–236 (GVDLGVAVIL…DGTETPGLLP (147 aa)) constitute a Nudix hydrolase domain. The Nudix box motif lies at 127 to 148 (GHVELEEELLDGGLRELWEESG). Mg(2+) is bound by residues Glu142 and Glu146. Residues 299–328 (PCKSAAYLDPGPAKEEWNMDPLPPNQGSGK) are disordered.

The protein belongs to the Nudix hydrolase family. Mg(2+) serves as cofactor. The cofactor is Mn(2+).

The catalysed reaction is a 5'-end (N(7)-methyl 5'-triphosphoguanosine)-ribonucleoside in mRNA + H2O = N(7)-methyl-GDP + a 5'-end phospho-ribonucleoside in mRNA + 2 H(+). Acts as a decapping enzyme capable of hydrolyzing monomethylated capped RNAs (in vitro). Hydrolyzes monomethylated capped RNA after alpha and beta phosphates to form N(7)-methyl-GDP. Shows low activity towards unmethylated capped RNA. This chain is m7GpppN-mRNA hydrolase NUDT17 (NUDT17), found in Homo sapiens (Human).